A 604-amino-acid chain; its full sequence is Kelch-like protein 15 (604 aa).

The 68-residue stretch at 31-98 folds into the BTB domain; that stretch reads LDVTLVIEDH…MYYGTIELSM (68 aa). The region spanning 133–237 is the BACK domain; that stretch reads CAEIMRLLDD…TPTSVFEKVK (105 aa). Kelch repeat units lie at residues 328–379, 381–426, 428–473, 489–542, and 544–590; these read FVFL…VIGK, IYAV…VLNN, LFIT…NKSK, KLYV…VLDK, and IMVL…VCNL.

Homodimer. Dimerization does not affect PPP2R5B-binding, but is required for its proteasomal degradation. Interacts with CUL3. Directly interacts with PPP2R5B; this interaction leads to PPP2R5B proteasomal degradation. Interacts with RBBP8/CtIP; this interaction leads to RBBP8 proteasomal degradation. Interacts with PACMP micropeptide; interaction prevents ubiquitination and degradation of RBBP8/CtIP.

It is found in the nucleus. Its pathway is protein modification; protein ubiquitination. Substrate-specific adapter for CUL3 E3 ubiquitin-protein ligase complex. Acts as an adapter for CUL3 to target the serine/threonine-protein phosphatase 2A (PP2A) subunit PPP2R5B for ubiquitination and subsequent proteasomal degradation, thus promoting exchange with other regulatory subunits. Acts as an adapter for CUL3 to target the DNA-end resection factor RBBP8/CtIP for ubiquitination and subsequent proteasomal degradation. Through the regulation of RBBP8/CtIP protein turnover, plays a key role in DNA damage response, favoring DNA double-strand repair through error-prone non-homologous end joining (NHEJ) over error-free, RBBP8-mediated homologous recombination (HR). This chain is Kelch-like protein 15 (KLHL15), found in Homo sapiens (Human).